Consider the following 247-residue polypeptide: Aliphatic sulfonates import ATP-binding protein SsuB 3 (247 aa).

The ABC transporter domain maps to 28-242; that stretch reads VSVRGLQRRY…ALRSILLEEL (215 aa). ATP is bound at residue 60–67; sequence GESGCGKT.

This sequence belongs to the ABC transporter superfamily. Aliphatic sulfonates importer (TC 3.A.1.17.2) family. The complex is composed of two ATP-binding proteins (SsuB), two transmembrane proteins (SsuC) and a solute-binding protein (SsuA).

The protein resides in the cell inner membrane. The enzyme catalyses ATP + H2O + aliphatic sulfonate-[sulfonate-binding protein]Side 1 = ADP + phosphate + aliphatic sulfonateSide 2 + [sulfonate-binding protein]Side 1.. In terms of biological role, part of the ABC transporter complex SsuABC involved in aliphatic sulfonates import. Responsible for energy coupling to the transport system. The polypeptide is Aliphatic sulfonates import ATP-binding protein SsuB 3 (Paraburkholderia xenovorans (strain LB400)).